Reading from the N-terminus, the 225-residue chain is C-type lectin domain-containing protein 91 (225 aa).

Residues 1–21 (MRSTYILIIVPLIIIGGGVVA) form the signal peptide. In terms of domain architecture, C-type lectin spans 85–215 (YSDSCYFIET…CTMAFKSICE (131 aa)). Cystine bridges form between cysteine 106-cysteine 214 and cysteine 185-cysteine 206. The N-linked (GlcNAc...) asparagine glycan is linked to asparagine 217.

The protein localises to the secreted. This chain is C-type lectin domain-containing protein 91 (clec-91), found in Caenorhabditis elegans.